The sequence spans 323 residues: 1D-myo-inositol 2-acetamido-2-deoxy-alpha-D-glucopyranoside deacetylase 1 (323 aa).

Histidine 30, aspartate 33, and histidine 165 together coordinate Zn(2+).

Belongs to the MshB deacetylase family. Requires Zn(2+) as cofactor.

The catalysed reaction is 1D-myo-inositol 2-acetamido-2-deoxy-alpha-D-glucopyranoside + H2O = 1D-myo-inositol 2-amino-2-deoxy-alpha-D-glucopyranoside + acetate. Functionally, catalyzes the deacetylation of 1D-myo-inositol 2-acetamido-2-deoxy-alpha-D-glucopyranoside (GlcNAc-Ins) in the mycothiol biosynthesis pathway. This chain is 1D-myo-inositol 2-acetamido-2-deoxy-alpha-D-glucopyranoside deacetylase 1, found in Catenulispora acidiphila (strain DSM 44928 / JCM 14897 / NBRC 102108 / NRRL B-24433 / ID139908).